We begin with the raw amino-acid sequence, 122 residues long: Small ribosomal subunit protein uS13 (122 aa).

The segment at 94–122 (GLPVRGQVTQKNARTRKGPRKTVAGKKGK) is disordered. A compositionally biased stretch (basic residues) spans 106–122 (ARTRKGPRKTVAGKKGK).

It belongs to the universal ribosomal protein uS13 family. In terms of assembly, part of the 30S ribosomal subunit. Forms a loose heterodimer with protein S19. Forms two bridges to the 50S subunit in the 70S ribosome.

Its function is as follows. Located at the top of the head of the 30S subunit, it contacts several helices of the 16S rRNA. In the 70S ribosome it contacts the 23S rRNA (bridge B1a) and protein L5 of the 50S subunit (bridge B1b), connecting the 2 subunits; these bridges are implicated in subunit movement. Contacts the tRNAs in the A and P-sites. The sequence is that of Small ribosomal subunit protein uS13 from Mycoplasma mobile (strain ATCC 43663 / 163K / NCTC 11711) (Mesomycoplasma mobile).